Reading from the N-terminus, the 300-residue chain is Quinolinate synthase (300 aa).

H21 and S38 together coordinate iminosuccinate. Residue C83 coordinates [4Fe-4S] cluster. Iminosuccinate contacts are provided by residues 109 to 111 (YVN) and S126. A [4Fe-4S] cluster-binding site is contributed by C170. Iminosuccinate is bound by residues 196 to 198 (HPE) and T213. C256 serves as a coordination point for [4Fe-4S] cluster.

It belongs to the quinolinate synthase family. Type 2 subfamily. As to quaternary structure, monomer. Homodimer. Requires [4Fe-4S] cluster as cofactor.

The protein resides in the cytoplasm. It catalyses the reaction iminosuccinate + dihydroxyacetone phosphate = quinolinate + phosphate + 2 H2O + H(+). It participates in cofactor biosynthesis; NAD(+) biosynthesis; quinolinate from iminoaspartate: step 1/1. Functionally, catalyzes the condensation of iminoaspartate with dihydroxyacetone phosphate to form quinolinate. The polypeptide is Quinolinate synthase (Pyrococcus horikoshii (strain ATCC 700860 / DSM 12428 / JCM 9974 / NBRC 100139 / OT-3)).